The sequence spans 159 residues: Testis-specific XK-related protein, Y-linked (159 aa).

The next 3 membrane-spanning stretches (helical) occupy residues 1–21 (MFIF…VGAI), 45–65 (IYLM…LAFF), and 72–92 (GSLH…WLEF).

This sequence belongs to the XK family. As to expression, testis specific.

It localises to the membrane. The protein is Testis-specific XK-related protein, Y-linked (XKRY) of Homo sapiens (Human).